Reading from the N-terminus, the 250-residue chain is L-ascorbate peroxidase 1, cytosolic (250 aa).

Catalysis depends on histidine 42, which acts as the Proton acceptor. The disordered stretch occupies residues 113–137 (VPFHPGREDKPAPPPEGRLPDATKG). Histidine 163 contacts heme b. K(+)-binding residues include threonine 164, threonine 180, asparagine 182, and aspartate 187.

It belongs to the peroxidase family. Ascorbate peroxidase subfamily. Requires heme b as cofactor.

The protein localises to the cytoplasm. It catalyses the reaction L-ascorbate + H2O2 = L-dehydroascorbate + 2 H2O. In terms of biological role, plays a key role in hydrogen peroxide removal. The sequence is that of L-ascorbate peroxidase 1, cytosolic (APX1) from Oryza sativa subsp. indica (Rice).